The sequence spans 367 residues: Putative F-box protein At4g10190 (367 aa).

The 51-residue stretch at 3 to 53 (KRNIVDLPEDLVMEILARVPTVTLVRLQSTSKRWNVLIEDKRFAEQHFTNA) folds into the F-box domain.

This chain is Putative F-box protein At4g10190, found in Arabidopsis thaliana (Mouse-ear cress).